A 778-amino-acid chain; its full sequence is Subtilisin-like protease SBT5.4 (778 aa).

The N-terminal stretch at 1-35 is a signal peptide; sequence MSMTRRYSSTQYSNKMSLQSLSSLLLLVTLFFSPA. The 86-residue stretch at 41–126 folds into the Inhibitor I9 domain; it reads SYIVYLGSHA…VFPNKGRKLH (86 aa). Residues 130–634 enclose the Peptidase S8 domain; that stretch reads SWNFMLLAKN…SGHVQPNKAA (505 aa). The active-site Charge relay system is the aspartate 163. Asparagine 218 carries an N-linked (GlcNAc...) asparagine glycan. Histidine 230 (charge relay system) is an active-site residue. 2 N-linked (GlcNAc...) asparagine glycosylation sites follow: asparagine 253 and asparagine 404. The 86-residue stretch at 401–486 folds into the PA domain; sequence ANGNVTDALL…KDGETLFSYL (86 aa). Residue serine 567 is the Charge relay system of the active site. 3 N-linked (GlcNAc...) asparagine glycosylation sites follow: asparagine 657, asparagine 690, and asparagine 732.

It belongs to the peptidase S8 family. As to expression, expressed in the vasculature of roots and leaves, stomata, sepals, stigma, anthers and siliques.

It is found in the endoplasmic reticulum. Its subcellular location is the cell membrane. Serine protease. Has a substrate preference for the hydrophobic residues Phe and Ala and the basic residue Asp in the P1 position, and for Asp, Leu or Ala in the P1' position. Interferes with CLAVATA 3 (CLV3) signaling, but does not cleave CLV3. The sequence is that of Subtilisin-like protease SBT5.4 from Arabidopsis thaliana (Mouse-ear cress).